A 336-amino-acid chain; its full sequence is Dihydroorotate dehydrogenase (quinone) (336 aa).

Residues 62 to 66 (AGLDK) and threonine 86 contribute to the FMN site. Lysine 66 contributes to the substrate binding site. Substrate is bound at residue 111–115 (NRMGF). FMN contacts are provided by asparagine 139 and asparagine 172. Position 172 (asparagine 172) interacts with substrate. The active-site Nucleophile is the serine 175. Substrate is bound at residue asparagine 177. Lysine 217 and threonine 245 together coordinate FMN. 246–247 (NT) is a substrate binding site. Residues glycine 268, glycine 297, and 318-319 (YS) contribute to the FMN site.

This sequence belongs to the dihydroorotate dehydrogenase family. Type 2 subfamily. Monomer. FMN serves as cofactor.

The protein resides in the cell membrane. The catalysed reaction is (S)-dihydroorotate + a quinone = orotate + a quinol. Its pathway is pyrimidine metabolism; UMP biosynthesis via de novo pathway; orotate from (S)-dihydroorotate (quinone route): step 1/1. Its function is as follows. Catalyzes the conversion of dihydroorotate to orotate with quinone as electron acceptor. The sequence is that of Dihydroorotate dehydrogenase (quinone) from Aeromonas hydrophila subsp. hydrophila (strain ATCC 7966 / DSM 30187 / BCRC 13018 / CCUG 14551 / JCM 1027 / KCTC 2358 / NCIMB 9240 / NCTC 8049).